Here is a 547-residue protein sequence, read N- to C-terminus: Chaperonin GroEL 1 (547 aa).

Residues 29 to 32, 86 to 90, G418, 482 to 484, and D498 each bind ATP; these read TLGP, DGTTT, and NAA.

This sequence belongs to the chaperonin (HSP60) family. As to quaternary structure, forms a cylinder of 14 subunits composed of two heptameric rings stacked back-to-back. Interacts with the co-chaperonin GroES.

Its subcellular location is the cytoplasm. The enzyme catalyses ATP + H2O + a folded polypeptide = ADP + phosphate + an unfolded polypeptide.. In terms of biological role, together with its co-chaperonin GroES, plays an essential role in assisting protein folding. The GroEL-GroES system forms a nano-cage that allows encapsulation of the non-native substrate proteins and provides a physical environment optimized to promote and accelerate protein folding. The sequence is that of Chaperonin GroEL 1 from Corynebacterium jeikeium (strain K411).